We begin with the raw amino-acid sequence, 299 residues long: MAAAEEGCDAGVEADRELEELLESALDDFDKAKPSPAPPPTTSAPDASGPQKKSPGDTAKDALFASQEKFFQELFDSELASQATAEFEKAMKELAEEEPHLVEQFQKLSEAAGRVGSDANSQQEFTSCLKETLSGLAKNATDLQNSGMSEEELTKAMEGLGMDDGDGDGNILPIMQSIMQNLLSKDVLYPSLKEITEKYPEWLQSHQESIPPEQFEKYQEQHSVMGKICEQFEAETPTDSEATHRARFEAVLDLMQQLQDLGHPPKELAGEMPPGLNFDLDTLNLSGPPGANGEQCLIM.

The interval 1–63 (MAAAEEGCDA…SPGDTAKDAL (63 aa)) is disordered. An N-acetylalanine modification is found at alanine 2. Residues 2–56 (AAAEEGCDAGVEADRELEELLESALDDFDKAKPSPAPPPTTSAPDASGPQKKSPG) are docking to the peroxisome membrane and binding to PEX3. Residues 2-91 (AAAEEGCDAG…QATAEFEKAM (90 aa)) are necessary for PEX19 function on peroxisome biogenesis. Over residues 16 to 27 (RELEELLESALD) the composition is skewed to acidic residues. 3 positions are modified to phosphoserine: serine 35, serine 54, and serine 66. Threonine 236 carries the post-translational modification Phosphothreonine. Cysteine 296 bears the Cysteine methyl ester mark. Cysteine 296 carries the S-farnesyl cysteine lipid modification. The propeptide at 297–299 (LIM) is removed in mature form.

This sequence belongs to the peroxin-19 family. Interacts with a broad range of peroxisomal membrane proteins, including PEX3, PEX10, PEX11A, PEX11B, PEX12, PEX13, PEX14 and PEX16, PXMP2/PMP22, PXMP4/PMP24, SLC25A17/PMP34, ABCD1/ALDP, ABCD2/ALDRP, and ABCD3/PMP70. Also interacts with the tumor suppressor CDKN2A/p19ARF. As to expression, ubiquitous.

It is found in the cytoplasm. Its subcellular location is the peroxisome membrane. Functionally, necessary for early peroxisomal biogenesis. Acts both as a cytosolic chaperone and as an import receptor for peroxisomal membrane proteins (PMPs). Binds and stabilizes newly synthesized PMPs in the cytoplasm by interacting with their hydrophobic membrane-spanning domains, and targets them to the peroxisome membrane by binding to the integral membrane protein PEX3. Excludes CDKN2A from the nucleus and prevents its interaction with MDM2, which results in active degradation of TP53. This Cricetulus griseus (Chinese hamster) protein is Peroxisomal biogenesis factor 19 (PEX19).